The primary structure comprises 306 residues: Glutaminase (306 aa).

Substrate is bound by residues serine 64, asparagine 115, glutamate 159, asparagine 166, tyrosine 190, tyrosine 242, and valine 260.

This sequence belongs to the glutaminase family. In terms of assembly, homotetramer.

It catalyses the reaction L-glutamine + H2O = L-glutamate + NH4(+). The protein is Glutaminase of Vibrio vulnificus (strain YJ016).